The chain runs to 196 residues: Nucleoid occlusion factor SlmA (196 aa).

An HTH tetR-type domain is found at 7–68; sequence INRREEILQA…GLIEFIEESL (62 aa). Positions 31–50 form a DNA-binding region, H-T-H motif; that stretch reads TTAKLAKQVGVSEAALYRHF. The stretch at 110–139 forms a coiled coil; the sequence is HALMFENERLRDRINQLFERIETSLRQILR.

It belongs to the nucleoid occlusion factor SlmA family. In terms of assembly, homodimer. Interacts with FtsZ.

Its subcellular location is the cytoplasm. It is found in the nucleoid. Its function is as follows. Required for nucleoid occlusion (NO) phenomenon, which prevents Z-ring formation and cell division over the nucleoid. Acts as a DNA-associated cell division inhibitor that binds simultaneously chromosomal DNA and FtsZ, and disrupts the assembly of FtsZ polymers. SlmA-DNA-binding sequences (SBS) are dispersed on non-Ter regions of the chromosome, preventing FtsZ polymerization at these regions. The polypeptide is Nucleoid occlusion factor SlmA (Vibrio cholerae serotype O1 (strain ATCC 39315 / El Tor Inaba N16961)).